The chain runs to 382 residues: Serine/threonine-protein kinase (382 aa).

Residues 1–10 show a composition bias toward basic and acidic residues; sequence MENKQCDHLT. The tract at residues 1–75 is disordered; sequence MENKQCDHLT…ASESDEDDDD (75 aa). Over residues 12 to 24 the composition is skewed to polar residues; that stretch reads WFSTTSDASESMD. The segment covering 45–75 has biased composition (acidic residues); sequence ADEDLYSDISEGDLEYSDCDSASESDEDDDD. Residues 93–379 form the Protein kinase domain; the sequence is YTVIKTLTPG…AEELLSYPMF (287 aa). ATP-binding positions include 99-107 and Lys-122; that span reads LTPGSEGRV. The Proton acceptor role is filled by Asp-207.

This sequence belongs to the protein kinase superfamily. Ser/Thr protein kinase family.

The enzyme catalyses L-seryl-[protein] + ATP = O-phospho-L-seryl-[protein] + ADP + H(+). It carries out the reaction L-threonyl-[protein] + ATP = O-phospho-L-threonyl-[protein] + ADP + H(+). In Equus caballus (Horse), this protein is Serine/threonine-protein kinase (US2).